The sequence spans 270 residues: 5'-AMP-activated protein kinase subunit beta-1 (270 aa).

The interval 1-46 (MGNTSSERAALERHGGHKTPRRDSSGGTKDGDRPKILMDSPEDADL) is disordered. Gly-2 carries N-myristoyl glycine lipidation. At Thr-4 the chain carries Phosphothreonine. Phosphoserine is present on residues Ser-5 and Ser-6. At Thr-19 the chain carries Phosphothreonine. Over residues 21–36 (RRDSSGGTKDGDRPKI) the composition is skewed to basic and acidic residues. 2 positions are modified to phosphoserine; by autocatalysis: Ser-24 and Ser-25. Residues Ser-40, Ser-96, and Ser-101 each carry the phosphoserine modification. The tract at residues 68–163 (EVNDKAPAQA…QVKKTDFEVF (96 aa)) is glycogen-binding domain. The residue at position 108 (Ser-108) is a Phosphoserine; by autocatalysis. Position 148 is a phosphothreonine (Thr-148). Ser-182 bears the Phosphoserine mark.

This sequence belongs to the 5'-AMP-activated protein kinase beta subunit family. AMPK is a heterotrimer of an alpha catalytic subunit (PRKAA1 or PRKAA2), a beta (PRKAB1 or PRKAB2) and a gamma non-catalytic subunits (PRKAG1, PRKAG2 or PRKAG3). Interacts with FNIP1 and FNIP2. In terms of processing, phosphorylated when associated with the catalytic subunit (PRKAA1 or PRKAA2). Phosphorylated by ULK1; leading to negatively regulate AMPK activity and suggesting the existence of a regulatory feedback loop between ULK1 and AMPK.

In terms of biological role, non-catalytic subunit of AMP-activated protein kinase (AMPK), an energy sensor protein kinase that plays a key role in regulating cellular energy metabolism. In response to reduction of intracellular ATP levels, AMPK activates energy-producing pathways and inhibits energy-consuming processes: inhibits protein, carbohydrate and lipid biosynthesis, as well as cell growth and proliferation. AMPK acts via direct phosphorylation of metabolic enzymes, and by longer-term effects via phosphorylation of transcription regulators. Also acts as a regulator of cellular polarity by remodeling the actin cytoskeleton; probably by indirectly activating myosin. Beta non-catalytic subunit acts as a scaffold on which the AMPK complex assembles, via its C-terminus that bridges alpha (PRKAA1 or PRKAA2) and gamma subunits (PRKAG1, PRKAG2 or PRKAG3). The chain is 5'-AMP-activated protein kinase subunit beta-1 (PRKAB1) from Pongo abelii (Sumatran orangutan).